A 73-amino-acid chain; its full sequence is Conotoxin Im14.3 (73 aa).

An N-terminal signal peptide occupies residues 1-17 (MGVFRCCLAAALVVVCL). Positions 18–35 (SRMGGTEPLESNHEDERR) are excised as a propeptide. Residues 22–42 (GTEPLESNHEDERRADDTSGD) form a disordered region. Residues 27 to 38 (ESNHEDERRADD) show a composition bias toward basic and acidic residues. Residues 44–73 (CVDTNEDCVNWASTGQCEANPSYMRENCRK) enclose the ShKT domain.

Contain 2 disulfide bonds. In terms of tissue distribution, expressed by the venom duct.

It is found in the secreted. Probable neurotoxin. In Conus imperialis (Imperial cone), this protein is Conotoxin Im14.3.